The chain runs to 191 residues: Adenylate kinase (191 aa).

12–17 contacts ATP; it reads GSGKTT. The tract at residues 34 to 63 is NMP; sequence STGDLLRAESAKKTERGLLIEKFTSQGELV. Residues T35, R40, 61–63, 88–91, and Q95 contribute to the AMP site; these read ELV and GYPR. The LID stretch occupies residues 130–136; it reads GRSRGAD. R131 contributes to the ATP binding site. Residues R133 and R145 each coordinate AMP. Position 173 (R173) interacts with ATP.

This sequence belongs to the adenylate kinase family. In terms of assembly, monomer.

The protein resides in the cytoplasm. The catalysed reaction is AMP + ATP = 2 ADP. Its pathway is purine metabolism; AMP biosynthesis via salvage pathway; AMP from ADP: step 1/1. Functionally, catalyzes the reversible transfer of the terminal phosphate group between ATP and AMP. Plays an important role in cellular energy homeostasis and in adenine nucleotide metabolism. The sequence is that of Adenylate kinase from Helicobacter pylori (strain Shi470).